The primary structure comprises 514 residues: MLALLSVSDKRGLVPFAQGLVRLGFRLLSTGGTLEALKGAGVPVNKVSEHTQSPEILGGRVKTLHPRIHGGILGRLELEADREEMKAHGIEPISLVAVNLYPFRQTVASGAAEPEVIEQIDIGGPAMVRASAKNFRHVSVVVDPDDYPAVLAELEQQKAVSEDTRRRLMRKAFAHTAAYDASISAWLSAQAGEPFPGELSLAFQKSQDLRYGENPHQRGAFYREHAAPQEPTVAFAKVLQGKELSYNNILDLDAALGLLLEFPEAPAAVIIKHNTPCGVAVDAALVKAYRTARAVDEVSAFGGIVALNREVDAATAQAMAETFLEAVIAPSYSPEALQVLATKKNLRLLEAGPALASPQARPRAQLDARSVSGGMLLMDRDSVEPPLSWKVVSKRAPTPEEEQAMRFAWKVCKHVKSNAIVFASGDQLLAQGGGQTNRVDSVRIAMQRGGAALRGSAVASDAFFPFRDGLDEAARAGATCVVQPGGSVRDAELIAAADEHGMAMVLTGVRHFRH.

In terms of domain architecture, MGS-like spans Met-1 to Val-142.

The protein belongs to the PurH family.

The enzyme catalyses (6R)-10-formyltetrahydrofolate + 5-amino-1-(5-phospho-beta-D-ribosyl)imidazole-4-carboxamide = 5-formamido-1-(5-phospho-D-ribosyl)imidazole-4-carboxamide + (6S)-5,6,7,8-tetrahydrofolate. It catalyses the reaction IMP + H2O = 5-formamido-1-(5-phospho-D-ribosyl)imidazole-4-carboxamide. It functions in the pathway purine metabolism; IMP biosynthesis via de novo pathway; 5-formamido-1-(5-phospho-D-ribosyl)imidazole-4-carboxamide from 5-amino-1-(5-phospho-D-ribosyl)imidazole-4-carboxamide (10-formyl THF route): step 1/1. The protein operates within purine metabolism; IMP biosynthesis via de novo pathway; IMP from 5-formamido-1-(5-phospho-D-ribosyl)imidazole-4-carboxamide: step 1/1. This chain is Bifunctional purine biosynthesis protein PurH, found in Myxococcus xanthus (strain DK1622).